The primary structure comprises 267 residues: U6 snRNA phosphodiesterase 1 (267 aa).

The tract at residues 1–72 is disordered; that stretch reads MNAAPLVGYS…EDDSARHGGR (72 aa). The active-site Proton acceptor is the H122. Position 122 to 124 (122 to 124) interacts with AMP; it reads HLS. Residues Q166, Y204, and 208–212 each bind UMP; that span reads SFHVS. AMP contacts are provided by residues Y204 and 206-212; that span reads DPSFHVS. The active-site Proton donor is H210.

This sequence belongs to the 2H phosphoesterase superfamily. USB1 family. Interacts with PLRG1, CDC5L and PRPF19.

The protein localises to the nucleus. The catalysed reaction is a 3'-end uridylyl-uridine-RNA = a 3'-end 2',3'-cyclophospho-uridine-RNA + uridine. It carries out the reaction a 3'-end uridylyl-adenosine-RNA = a 3'-end 2',3'-cyclophospho-uridine-RNA + adenosine. In terms of biological role, 3'-5' RNA exonuclease that trims the 3' end of oligo(U) and oligo(A) tracts of the pre-U6 small nuclear RNA (snRNA) molecule, leading to the formation of a mature U6 snRNA 3' end-terminated with a 2',3'-cyclic phosphate. Participates in the U6 snRNA 3' end processing that prevents U6 snRNA degradation. In addition also removes uridines from the 3' end of U6atac snRNA and possibly the vault RNA VTRNA1-1. In Rattus norvegicus (Rat), this protein is U6 snRNA phosphodiesterase 1.